The primary structure comprises 357 residues: DNA replication and repair protein RecF (357 aa).

Residue G30–T37 coordinates ATP.

It belongs to the RecF family.

It localises to the cytoplasm. Functionally, the RecF protein is involved in DNA metabolism; it is required for DNA replication and normal SOS inducibility. RecF binds preferentially to single-stranded, linear DNA. It also seems to bind ATP. This Klebsiella pneumoniae subsp. pneumoniae (strain ATCC 700721 / MGH 78578) protein is DNA replication and repair protein RecF.